Consider the following 185-residue polypeptide: Ribosome-recycling factor (185 aa).

Belongs to the RRF family.

It localises to the cytoplasm. Its function is as follows. Responsible for the release of ribosomes from messenger RNA at the termination of protein biosynthesis. May increase the efficiency of translation by recycling ribosomes from one round of translation to another. This chain is Ribosome-recycling factor, found in Yersinia enterocolitica serotype O:8 / biotype 1B (strain NCTC 13174 / 8081).